The primary structure comprises 197 residues: dITP/XTP pyrophosphatase (197 aa).

Residue 8–13 (TGNQGK) coordinates substrate. The active-site Proton acceptor is the D69. D69 is a Mg(2+) binding site. Residues S70, 154 to 157 (FGYD), K177, and 182 to 183 (HR) each bind substrate.

It belongs to the HAM1 NTPase family. As to quaternary structure, homodimer. It depends on Mg(2+) as a cofactor.

The catalysed reaction is XTP + H2O = XMP + diphosphate + H(+). It carries out the reaction dITP + H2O = dIMP + diphosphate + H(+). The enzyme catalyses ITP + H2O = IMP + diphosphate + H(+). Functionally, pyrophosphatase that catalyzes the hydrolysis of nucleoside triphosphates to their monophosphate derivatives, with a high preference for the non-canonical purine nucleotides XTP (xanthosine triphosphate), dITP (deoxyinosine triphosphate) and ITP. Seems to function as a house-cleaning enzyme that removes non-canonical purine nucleotides from the nucleotide pool, thus preventing their incorporation into DNA/RNA and avoiding chromosomal lesions. The sequence is that of dITP/XTP pyrophosphatase from Photobacterium profundum (strain SS9).